A 549-amino-acid polypeptide reads, in one-letter code: Oxygen-dependent choline dehydrogenase (549 aa).

An FAD-binding site is contributed by 4–33 (DFVIIGSGSAGSALAYRLSEDGANSVVVLE). Residue H465 is the Proton acceptor of the active site.

It belongs to the GMC oxidoreductase family. FAD is required as a cofactor.

The enzyme catalyses choline + A = betaine aldehyde + AH2. The catalysed reaction is betaine aldehyde + NAD(+) + H2O = glycine betaine + NADH + 2 H(+). The protein operates within amine and polyamine biosynthesis; betaine biosynthesis via choline pathway; betaine aldehyde from choline (cytochrome c reductase route): step 1/1. Functionally, involved in the biosynthesis of the osmoprotectant glycine betaine. Catalyzes the oxidation of choline to betaine aldehyde and betaine aldehyde to glycine betaine at the same rate. This is Oxygen-dependent choline dehydrogenase from Sinorhizobium medicae (strain WSM419) (Ensifer medicae).